A 515-amino-acid polypeptide reads, in one-letter code: Aldehyde dehydrogenase tropH (515 aa).

Residue 238-243 (GSVATG) coordinates NAD(+). The active-site Proton acceptor is the Glu-260. Cys-295 (nucleophile) is an active-site residue.

It belongs to the aldehyde dehydrogenase family.

It catalyses the reaction an aldehyde + NAD(+) + H2O = a carboxylate + NADH + 2 H(+). It participates in secondary metabolite biosynthesis. In terms of biological role, aldehyde dehydrogenase; part of the gene cluster that mediates the biosynthesis of the tropolone class of fungal maleic anhydrides. The pathway begins with the synthesis of 3-methylorcinaldehyde by the non-reducing polyketide synthase (PKS) tropA. 3-methylorcinaldehyde is the substrate for the FAD-dependent monooxygenase tropB to yield a dearomatized hydroxycyclohexadione. The 2-oxoglutarate-dependent dioxygenase tropC then performs the oxidative ring expansion to provide the first tropolone metabolite stipitaldehyde. Trop D converts stipitaldehyde into stipitacetal which is in turn converted to stipitalide by the short-chain dehydrogenase/reductase tropE. The next steps involve tropF, tropG, tropH, tropI and tropJ to form successive tropolone maleic anhydrides including stipitaldehydic, stipitatonic and stipitatic acids. This chain is Aldehyde dehydrogenase tropH, found in Talaromyces stipitatus (strain ATCC 10500 / CBS 375.48 / QM 6759 / NRRL 1006) (Penicillium stipitatum).